Here is a 526-residue protein sequence, read N- to C-terminus: Putative ankyrin repeat protein R840 (526 aa).

ANK repeat units follow at residues 78-107, 108-137, 139-167, 169-197, 198-227, 229-255, 256-285, 286-315, 317-345, 346-375, 376-405, 406-435, 437-467, 468-497, and 499-526; these read TLNE…NIRS, RDNF…DIRS, KNYA…NIRD, DNCA…DSTS, NFNE…RCRN, SAII…NIRI, DDDY…NIRS, EIDH…DIKS, YDRS…NIRN, INDY…NIRV, DNDS…DIRV, NNYQ…NVSI, NVPL…DINL, ADDM…NVRA, and NDYA…AILS.

The polypeptide is Putative ankyrin repeat protein R840 (Acanthamoeba polyphaga (Amoeba)).